Here is a 461-residue protein sequence, read N- to C-terminus: Cysteine--tRNA ligase (461 aa).

Residue C28 coordinates Zn(2+). A 'HIGH' region motif is present at residues 30–40 (ITVYDLCHIGH). The Zn(2+) site is built by C209, H234, and E238. The 'KMSKS' region motif lies at 266-270 (KMSKS). An ATP-binding site is contributed by K269.

Belongs to the class-I aminoacyl-tRNA synthetase family. In terms of assembly, monomer. The cofactor is Zn(2+).

Its subcellular location is the cytoplasm. It catalyses the reaction tRNA(Cys) + L-cysteine + ATP = L-cysteinyl-tRNA(Cys) + AMP + diphosphate. The sequence is that of Cysteine--tRNA ligase from Shigella flexneri.